Reading from the N-terminus, the 248-residue chain is mRNA-decapping protein OPG122 (248 aa).

In terms of domain architecture, Nudix hydrolase spans 45–227 (HKRVSVSAIL…IAKYALDTAK (183 aa)). Residues 125–147 (GGIPKRGENVPECLSREIKEEVN) carry the Nudix box motif.

Belongs to the Nudix hydrolase family. Interacts with the late transcription elongation factor VLTF-4/OPG110. Interacts with the late transcription factors VLTF-1. It depends on Mg(2+) as a cofactor. Mn(2+) is required as a cofactor.

The protein localises to the host mitochondrion. Functionally, acts with RNA polymerase to initiate transcription from late gene promoters. This chain is mRNA-decapping protein OPG122 (OPG122), found in Cynomys gunnisoni (Gunnison's prairie dog).